The sequence spans 529 residues: Peptide chain release factor 3 (529 aa).

The 270-residue stretch at 11–280 (SKRRTFAIIS…GLTDWAPAPL (270 aa)) folds into the tr-type G domain. GTP-binding positions include 20–27 (SHPDAGKT), 88–92 (DTPGH), and 142–145 (NKLD).

The protein belongs to the TRAFAC class translation factor GTPase superfamily. Classic translation factor GTPase family. PrfC subfamily.

The protein localises to the cytoplasm. Functionally, increases the formation of ribosomal termination complexes and stimulates activities of RF-1 and RF-2. It binds guanine nucleotides and has strong preference for UGA stop codons. It may interact directly with the ribosome. The stimulation of RF-1 and RF-2 is significantly reduced by GTP and GDP, but not by GMP. In Vibrio vulnificus (strain CMCP6), this protein is Peptide chain release factor 3.